A 350-amino-acid polypeptide reads, in one-letter code: Phosphotriesterase-related protein (350 aa).

A divalent metal cation-binding residues include H22, H24, E169, H201, H230, and D298.

This sequence belongs to the metallo-dependent hydrolases superfamily. Phosphotriesterase family. It depends on a divalent metal cation as a cofactor.

The protein is Phosphotriesterase-related protein of Drosophila erecta (Fruit fly).